Consider the following 956-residue polypeptide: Calsyntenin-3 (956 aa).

The signal sequence occupies residues 1–19 (MTLLLVSLLLASLLQISSG). Topologically, residues 1–21 (MTLLLVSLLLASLLQISSGNK) are cytoplasmic. Over 20–847 (NKANKHKPWI…SHRNSMVPSA (828 aa)) the chain is Extracellular. The helical intramembrane region spans 22–42 (ANKHKPWIEAEYQGIVMENDN). Cadherin domains are found at residues 29–145 (IEAE…APVF) and 146–246 (VERL…KPSW). Over 43–73 (TVLLNPPLFALDKDAPLRYAGEICGFRLHGS) the chain is Cytoplasmic. The segment at residues 74-94 (GVPFEAVILDKATGEGLIRAK) is an intramembrane region (helical). At 95–139 (EPVDCEAQKEHTFTIQAYDCGEGPDGTNTKKSHKATVHVRVNDVN) the chain is on the cytoplasmic side. The segment at residues 140 to 160 (EFAPVFVERLYRAAVTEGKLY) is an intramembrane region (helical). Topologically, residues 161 to 248 (DRILRVEAID…KPTCKPSWQG (88 aa)) are cytoplasmic. Residues 249–269 (WNKRIEYAPGAGSLALFPGIR) form a helical membrane-spanning segment. At 270-357 (LETCDEPLWN…GTQAVQVPLG (88 aa)) the chain is on the lumenal side. Residues asparagine 299, asparagine 327, asparagine 347, asparagine 507, and asparagine 740 are each glycosylated (N-linked (GlcNAc...) asparagine). A helical membrane pass occupies residues 848–868 (ATLIIVVCVGFLVLMVILGLV). Residues 869 to 956 (RIHSLHRRVS…RIIESPPHRY (88 aa)) are Cytoplasmic-facing. Residues 916–956 (QTCVAGVAGGQQEEEDSSDSEAADSPSSDERRIIESPPHRY) form a disordered region. The span at 927 to 937 (QEEEDSSDSEA) shows a compositional bias: acidic residues. Over residues 943–956 (SDERRIIESPPHRY) the composition is skewed to basic and acidic residues.

The protein belongs to the calsyntenin family. As to quaternary structure, interacts (via cadherin domains) with both alpha and beta isoforms of neurexins (NRXN1, NRXN2 and NRXN3). Directly interacts with APBA2. Forms a tripartite complex with APBA2 and APP. Interacts with low affinity with KLC1. Interacts with SLC23A2/SVCT2. Interacts with CIDEA; inhibiting the lipid transferase activity of CIDEA. Interacts with CIDEC; inhibiting the lipid transferase activity of CIDEC. In terms of processing, proteolytically processed under normal cellular conditions. A primary zeta-cleavage generates a large extracellular (soluble) N-terminal domain (sAlc) and a short C-terminal transmembrane fragment (CTF1). A secondary cleavage catalyzed by gamma-secretase within the transmembrane domain releases the beta-Alc-beta chain in the extracellular milieu and produces an intracellular fragment (AlcICD). This processing is strongly suppressed in the tripartite complex formed with APBA2 and APP, which seems to prevent the association with gamma-secretase. Post-translationally, ubiquitinated: endoplasmic reticulum-localized protein is ubiquitinated and degraded by the endoplasmic reticulum-associated degradation (ERAD) pathway. Restricted to the brain (at protein level). In the cerebral cortex, found in the somas and neuropil of all layers. Expressed at highest levels in neurons of cortical layer 5 and, at lower levels, in neurons of the upper layers. Highly expressed in Purkinje cells. Also found in a few scattered interneurons throughout the granule cell layer and occasionally in neurons in the molecular layer (at protein level). In all layers, high levels in a subpopulation of presumptive GABAergic neurons (based on morphology). As to expression, expression is restricted to adipose tissue, with high expression in thermogenic adipocytes (brown adipose tissue).

The protein localises to the postsynaptic cell membrane. Its subcellular location is the endoplasmic reticulum membrane. It localises to the golgi apparatus membrane. It is found in the cell projection. The protein resides in the dendrite. The protein localises to the lipid droplet. Functionally, postsynaptic adhesion molecule that binds to presynaptic neurexins to mediate both excitatory and inhibitory synapse formation. Promotes synapse development by acting as a cell adhesion molecule at the postsynaptic membrane, which associates with both neurexin-alpha and neurexin-beta proteins at the presynaptic membrane. Regulates the balance between excitatory and inhibitory synapses by inhibiting formation of excitatory parallel-fiber synapses and promoting formation of inhibitory synapses in the same neuron. May also be involved in ascorbate (vitamin C) uptake via its interaction with SLC23A2/SVCT2. Complex formation with APBA2 and APP, stabilizes APP metabolism and enhances APBA2-mediated suppression of beta-APP40 secretion, due to the retardation of intracellular APP maturation. Its function is as follows. Adipose-specific isoform that plays a key role in adaptive thermogenesis. Facilitates the efficient use of stored triglyceride by promoting multilocular morphology of thermogenic adipocytes: acts by inhibiting the activity of CIDEA and CIDEC on lipid droplets, thereby preventing lipid droplet fusion and facilitating lipid utilization. May also participate in adaptive thermogenesis by promoting sympathetic innervation of thermogenic adipose tissue: acts by driving secretion of neurotrophic factor S100B from brown adipocytes, stimulating neurite outgrowth from sympathetic neurons. This is Calsyntenin-3 from Mus musculus (Mouse).